The primary structure comprises 381 residues: MMKKSLCCALLLTASFSTFAAAKTEQQIADIVNRTITPLMQEQAIPGMAVAVIYQGKPYYFTWGKADIANNHPVTQQTLFELGSVSKTFNGVLGGDAIARGEIKLSDPVTKYWPELTGKQWQGIRLLHLATYTAGGLPLQIPDDVRDKAALLHFYQNWQPQWTPGAKRLYANSSIGLFGALAVKPSGMSYEEAMTRRVLQPLKLAHTWITVPQNEQKDYARGYREGKPVHVSPGQLDAEAYGVKSSVIDMARWVQANMDASHVQEKTLQQGIALAQSRYWRIGDMYQGLGWEMLNWPLKADSIINGSDSKVALAALPAVEVNPPAPAVKASWVHKTGSTGGFGSYVAFVPEKNLGIVMLANKSYPNPVRVEAAWRILEKLQ.

A signal peptide spans 1–20 (MMKKSLCCALLLTASFSTFA). Catalysis depends on Ser84, which acts as the Acyl-ester intermediate. Residues Ser84, Gln140, Tyr170, and Asn172 each coordinate a beta-lactam.

It belongs to the class-C beta-lactamase family.

It carries out the reaction a beta-lactam + H2O = a substituted beta-amino acid. Functionally, class C beta-lactamase which confers resistance to penicillins and cephalosporins. The protein is Beta-lactamase CMY-4 of Klebsiella pneumoniae.